The sequence spans 1312 residues: Beta-N-acetylhexosaminidase (1312 aa).

Positions 1–33 (MKHEKQQRFSIRKYAVGAASVLIGFAFQAQTVA) are cleaved as a signal peptide. A compositionally biased stretch (polar residues) spans 38 to 59 (TPTTTENQPTIHTVSDSPQSSE). The tract at residues 38–178 (TPTTTENQPT…ATEAGKERAA (141 aa)) is disordered. Residues 118 to 177 (AEKETANKKAEEASPKKEEAKEVDSKESNTDKTDKDKPAKKDEAKAEADKPATEAGKERA) are compositionally biased toward basic and acidic residues. 2 catalytic domain regions span residues 176–616 (RAAT…TPEA) and 621–1046 (EAKR…PAVT). 2 G5 domains span residues 1059-1138 (NVET…GAPV) and 1150-1230 (TTEV…GTMV). Residues 1244 to 1290 (EEKPKLEIPSQPAPSTAPAEESKVLPQDPAPVVTEKKLPETGTHDSA) form a disordered region. Residues 1277–1286 (TEKKLPETGT) show a composition bias toward basic and acidic residues. The LPXTG sorting signal motif lies at 1281–1285 (LPETG). Threonine 1284 bears the Pentaglycyl murein peptidoglycan amidated threonine mark. A propeptide spans 1285–1312 (GTHDSAGLVVAGLMSTLAAYGLTKRKED) (removed by sortase).

It belongs to the glycosyl hydrolase 20 family.

Its subcellular location is the secreted. The protein resides in the cell wall. The enzyme catalyses Hydrolysis of terminal non-reducing N-acetyl-D-hexosamine residues in N-acetyl-beta-D-hexosaminides.. This Streptococcus pneumoniae serotype 4 (strain ATCC BAA-334 / TIGR4) protein is Beta-N-acetylhexosaminidase (strH).